The chain runs to 290 residues: Lectin-related protein (290 aa).

The signal sequence occupies residues 1–36 (ANSNSRPHLLQTQKPFSVVLAISITFYLLLLNKVNS). Asn119, Asn147, and Asn152 each carry an N-linked (GlcNAc...) asparagine glycan. Positions 161 and 163 each coordinate Mn(2+). Positions 163, 167, and 170 each coordinate Ca(2+). Asp170 and His175 together coordinate Mn(2+).

This sequence belongs to the leguminous lectin family. Homotetramer.

Does not have any carbohydrate binding or agglutination activity. This Cladrastis kentukea (Yellow wood) protein is Lectin-related protein.